The sequence spans 501 residues: Acetylcholine receptor subunit beta (501 aa).

The N-terminal stretch at 1-23 (MALGALLLILGILGTPLAPGARG) is a signal peptide. At 24–244 (SEAEGQLLKK…VIFYLIIRRK (221 aa)) the chain is on the extracellular side. A disulfide bridge links Cys151 with Cys165. N-linked (GlcNAc...) asparagine glycosylation is present at Asn164. 3 helical membrane-spanning segments follow: residues 245-269 (PLFY…VFYL), 277-295 (MGLS…LLLA), and 311-332 (YLMF…VLNL). Topologically, residues 333–469 (HHRSPHTHQM…WQFVAMVVDR (137 aa)) are cytoplasmic. Positions 362 to 381 (RPKPERDQLPEPHHSFSPRS) are disordered. The segment covering 363 to 375 (PKPERDQLPEPHH) has biased composition (basic and acidic residues). Tyr390 is modified (phosphotyrosine; by Tyr-kinases). Residues 470 to 488 (LFLWTFIVFTSVGTLVIFL) traverse the membrane as a helical segment.

The protein belongs to the ligand-gated ion channel (TC 1.A.9) family. Acetylcholine receptor (TC 1.A.9.1) subfamily. Beta-1/CHRNB1 sub-subfamily. In terms of assembly, pentamer of two alpha chains, and one each of the beta, delta, and gamma (in immature muscle) or epsilon (in mature muscle) chains. The muscle heteropentamer composed of alpha-1, beta-1, delta, epsilon subunits interacts with the alpha-conotoxin ImII.

The protein resides in the postsynaptic cell membrane. It localises to the cell membrane. The catalysed reaction is K(+)(in) = K(+)(out). It catalyses the reaction Na(+)(in) = Na(+)(out). After binding acetylcholine, the AChR responds by an extensive change in conformation that affects all subunits and leads to opening of an ion-conducting channel across the plasma membrane. In Rattus norvegicus (Rat), this protein is Acetylcholine receptor subunit beta (Chrnb1).